Here is a 280-residue protein sequence, read N- to C-terminus: uncharacterized protein (280 aa).

Residues 1–51 (MATSLLLRHSSAVFFSQSSFFTKNKSFRSFTSIKMEKGEAENAVKTKKVFV) constitute a chloroplast transit peptide.

This sequence belongs to the NAD(P)-dependent epimerase/dehydratase family.

Its subcellular location is the plastid. It is found in the chloroplast. The protein resides in the plastoglobule. This is an uncharacterized protein from Arabidopsis thaliana (Mouse-ear cress).